The sequence spans 152 residues: D-aminoacyl-tRNA deacylase (152 aa).

The short motif at 137–138 (GP) is the Gly-cisPro motif, important for rejection of L-amino acids element.

This sequence belongs to the DTD family. In terms of assembly, homodimer.

The protein resides in the cytoplasm. The enzyme catalyses glycyl-tRNA(Ala) + H2O = tRNA(Ala) + glycine + H(+). The catalysed reaction is a D-aminoacyl-tRNA + H2O = a tRNA + a D-alpha-amino acid + H(+). An aminoacyl-tRNA editing enzyme that deacylates mischarged D-aminoacyl-tRNAs. Also deacylates mischarged glycyl-tRNA(Ala), protecting cells against glycine mischarging by AlaRS. Acts via tRNA-based rather than protein-based catalysis; rejects L-amino acids rather than detecting D-amino acids in the active site. By recycling D-aminoacyl-tRNA to D-amino acids and free tRNA molecules, this enzyme counteracts the toxicity associated with the formation of D-aminoacyl-tRNA entities in vivo and helps enforce protein L-homochirality. The sequence is that of D-aminoacyl-tRNA deacylase from Geobacillus sp. (strain WCH70).